The following is a 190-amino-acid chain: NADH-quinone oxidoreductase subunit B (190 aa).

Cysteine 39, cysteine 40, cysteine 104, and cysteine 135 together coordinate [4Fe-4S] cluster.

The protein belongs to the complex I 20 kDa subunit family. In terms of assembly, NDH-1 is composed of 14 different subunits. Subunits NuoB, C, D, E, F, and G constitute the peripheral sector of the complex. The cofactor is [4Fe-4S] cluster.

The protein resides in the cell inner membrane. The enzyme catalyses a quinone + NADH + 5 H(+)(in) = a quinol + NAD(+) + 4 H(+)(out). NDH-1 shuttles electrons from NADH, via FMN and iron-sulfur (Fe-S) centers, to quinones in the respiratory chain. The immediate electron acceptor for the enzyme in this species is believed to be a menaquinone. Couples the redox reaction to proton translocation (for every two electrons transferred, four hydrogen ions are translocated across the cytoplasmic membrane), and thus conserves the redox energy in a proton gradient. The sequence is that of NADH-quinone oxidoreductase subunit B from Chlorobium phaeobacteroides (strain BS1).